Consider the following 191-residue polypeptide: Fe/S biogenesis protein NfuA (191 aa).

[4Fe-4S] cluster is bound by residues cysteine 149 and cysteine 152.

This sequence belongs to the NfuA family. Homodimer. It depends on [4Fe-4S] cluster as a cofactor.

Its function is as follows. Involved in iron-sulfur cluster biogenesis. Binds a 4Fe-4S cluster, can transfer this cluster to apoproteins, and thereby intervenes in the maturation of Fe/S proteins. Could also act as a scaffold/chaperone for damaged Fe/S proteins. The sequence is that of Fe/S biogenesis protein NfuA from Edwardsiella ictaluri (strain 93-146).